The following is a 586-amino-acid chain: Pyruvate kinase (586 aa).

Residue R32 coordinates substrate. N34, S36, D66, and T67 together coordinate K(+). 34–37 (NFSH) serves as a coordination point for ATP. 2 residues coordinate ATP: R73 and K156. Position 222 (E222) interacts with Mg(2+). Residues G245, D246, and T278 each contribute to the substrate site. D246 is a Mg(2+) binding site.

It belongs to the pyruvate kinase family. In the C-terminal section; belongs to the PEP-utilizing enzyme family. Mg(2+) is required as a cofactor. The cofactor is K(+).

It carries out the reaction pyruvate + ATP = phosphoenolpyruvate + ADP + H(+). The protein operates within carbohydrate degradation; glycolysis; pyruvate from D-glyceraldehyde 3-phosphate: step 5/5. The chain is Pyruvate kinase (pyk) from Staphylococcus saprophyticus subsp. saprophyticus (strain ATCC 15305 / DSM 20229 / NCIMB 8711 / NCTC 7292 / S-41).